Here is a 171-residue protein sequence, read N- to C-terminus: ATP synthase subunit b (171 aa).

The helical transmembrane segment at 2 to 22 (FVVKMVLGFLILLSPLCATGL) threads the bilayer.

It belongs to the ATPase B chain family. As to quaternary structure, F-type ATPases have 2 components, F(1) - the catalytic core - and F(0) - the membrane proton channel. F(1) has five subunits: alpha(3), beta(3), gamma(1), delta(1), epsilon(1). F(0) has three main subunits: a(1), b(2) and c(10-14). The alpha and beta chains form an alternating ring which encloses part of the gamma chain. F(1) is attached to F(0) by a central stalk formed by the gamma and epsilon chains, while a peripheral stalk is formed by the delta and b chains.

The protein localises to the cell inner membrane. Its function is as follows. F(1)F(0) ATP synthase produces ATP from ADP in the presence of a proton or sodium gradient. F-type ATPases consist of two structural domains, F(1) containing the extramembraneous catalytic core and F(0) containing the membrane proton channel, linked together by a central stalk and a peripheral stalk. During catalysis, ATP synthesis in the catalytic domain of F(1) is coupled via a rotary mechanism of the central stalk subunits to proton translocation. In terms of biological role, component of the F(0) channel, it forms part of the peripheral stalk, linking F(1) to F(0). The chain is ATP synthase subunit b from Helicobacter pylori (strain G27).